Consider the following 49-residue polypeptide: uncharacterized protein (49 aa).

This is an uncharacterized protein from Escherichia coli (Bacteriophage T4).